Reading from the N-terminus, the 83-residue chain is Small ribosomal subunit protein bS16 (83 aa).

This sequence belongs to the bacterial ribosomal protein bS16 family.

The polypeptide is Small ribosomal subunit protein bS16 (Verminephrobacter eiseniae (strain EF01-2)).